Consider the following 251-residue polypeptide: Membrane-anchored junction protein (251 aa).

Over 1-227 (MSLKPFTYPF…HSNPPPLKEP (227 aa)) the chain is Nuclear. The segment at 140 to 225 (RKRKLMEEPS…LEHSNPPPLK (86 aa)) is disordered. Over residues 183–198 (EDSQQDTPASDSTAVT) the composition is skewed to polar residues. A helical transmembrane segment spans residues 228 to 246 (AARGFLGFLSALFPFRYFF). At 247-251 (RKSTQ) the chain is on the perinuclear space side.

Belongs to the MAJIN family. In terms of assembly, component of the MAJIN-TERB1-TERB2 complex, composed of MAJIN, TERB1 and TERB2.

It localises to the nucleus inner membrane. The protein localises to the chromosome. Its subcellular location is the telomere. Functionally, meiosis-specific telomere-associated protein involved in meiotic telomere attachment to the nucleus inner membrane, a crucial step for homologous pairing and synapsis. Component of the MAJIN-TERB1-TERB2 complex, which promotes telomere cap exchange by mediating attachment of telomeric DNA to the inner nuclear membrane and replacement of the protective cap of telomeric chromosomes: in early meiosis, the MAJIN-TERB1-TERB2 complex associates with telomeric DNA and the shelterin/telosome complex. During prophase, the complex matures and promotes release of the shelterin/telosome complex from telomeric DNA. In the complex, MAJIN acts as the anchoring subunit to the nucleus inner membrane. MAJIN shows DNA-binding activity, possibly for the stabilization of telomere attachment on the nucleus inner membrane. This is Membrane-anchored junction protein from Rattus norvegicus (Rat).